Reading from the N-terminus, the 241-residue chain is Biosynthetic peptidoglycan transglycosylase (241 aa).

A helical transmembrane segment spans residues 19 to 39 (AILAVLGVWIAGILLFSVMPV).

Belongs to the glycosyltransferase 51 family.

It localises to the cell inner membrane. The enzyme catalyses [GlcNAc-(1-&gt;4)-Mur2Ac(oyl-L-Ala-gamma-D-Glu-L-Lys-D-Ala-D-Ala)](n)-di-trans,octa-cis-undecaprenyl diphosphate + beta-D-GlcNAc-(1-&gt;4)-Mur2Ac(oyl-L-Ala-gamma-D-Glu-L-Lys-D-Ala-D-Ala)-di-trans,octa-cis-undecaprenyl diphosphate = [GlcNAc-(1-&gt;4)-Mur2Ac(oyl-L-Ala-gamma-D-Glu-L-Lys-D-Ala-D-Ala)](n+1)-di-trans,octa-cis-undecaprenyl diphosphate + di-trans,octa-cis-undecaprenyl diphosphate + H(+). It functions in the pathway cell wall biogenesis; peptidoglycan biosynthesis. Peptidoglycan polymerase that catalyzes glycan chain elongation from lipid-linked precursors. The chain is Biosynthetic peptidoglycan transglycosylase from Cronobacter sakazakii (strain ATCC BAA-894) (Enterobacter sakazakii).